Consider the following 81-residue polypeptide: uncharacterized protein (81 aa).

This is an uncharacterized protein from Caenorhabditis elegans.